The primary structure comprises 83 residues: Putative membrane protein insertion efficiency factor (83 aa).

The segment at 64–83 (GGFDPVPLKKDKNSKTTHHH) is disordered.

The protein belongs to the UPF0161 family.

Its subcellular location is the cell membrane. In terms of biological role, could be involved in insertion of integral membrane proteins into the membrane. The protein is Putative membrane protein insertion efficiency factor of Staphylococcus epidermidis (strain ATCC 12228 / FDA PCI 1200).